The following is a 584-amino-acid chain: Pentatricopeptide repeat-containing protein At2g01510, mitochondrial (584 aa).

A mitochondrion-targeting transit peptide spans 1-20 (MLAKQTPLTKQMLSELLRAS). PPR repeat units lie at residues 73–107 (RIFL…GVRP), 108–142 (DEFT…GFGC), 143–173 (LGIV…MQVK), 174–208 (DLVA…AVQF), 209–243 (DSFT…EIDC), 244–274 (NIIV…MKQR), 275–309 (NVVS…GLRP), 310–344 (NYVT…NDKN), and 348–378 (RKEH…MPVE). The type E motif stretch occupies residues 383-458 (IWGALLGACA…VAAYSSVEFE (76 aa)). The tract at residues 459–489 (GKIHFFNRGDKSHPQSKAIYEKLDEILKKIR) is type E(+) motif. The segment at 490-584 (KMGYVPDTCS…NGVCSCKEFW (95 aa)) is type DYW motif.

This sequence belongs to the PPR family. PCMP-H subfamily.

It is found in the mitochondrion. This is Pentatricopeptide repeat-containing protein At2g01510, mitochondrial (PCMP-H37) from Arabidopsis thaliana (Mouse-ear cress).